Here is a 336-residue protein sequence, read N- to C-terminus: O-methyltransferase 2 (336 aa).

5 residues coordinate S-adenosyl-L-methionine: G170, D198, N221, F222, and K237. The active-site Proton acceptor is the H241.

It belongs to the class I-like SAM-binding methyltransferase superfamily. Cation-independent O-methyltransferase family. COMT subfamily.

It carries out the reaction (3,5-dichloro-2,4,6-trihydroxyphenyl)hexan-1-one + S-adenosyl-L-methionine = 1-(3,5-dichloro-2,6-dihydroxy-4-methoxyphenyl)hexan-1-one + S-adenosyl-L-homocysteine + H(+). This Dictyostelium discoideum (Social amoeba) protein is O-methyltransferase 2 (omt2).